The following is a 721-amino-acid chain: Xylosyl- and glucuronyltransferase LARGE2 (721 aa).

The Cytoplasmic portion of the chain corresponds to 1–8 (MLPRGRPR). A helical; Signal-anchor for type II membrane protein transmembrane segment spans residues 9 to 29 (ALGAAALLLLLLLLGFLLFGG). The Lumenal portion of the chain corresponds to 30-721 (DLGCERREPG…LQQPQSPARG (692 aa)). The segment at 59–89 (DGRLRRAAALDGDPGAGPGDHNRSDCGPQPP) is disordered. Asn80 and Asn107 each carry an N-linked (GlcNAc...) asparagine glycan. The tract at residues 97–372 (LHVAIVCAGH…FLEYDGNLLR (276 aa)) is xylosyltransferase activity. Positions 201 and 203 each coordinate Mn(2+). N-linked (GlcNAc...) asparagine glycosylation occurs at Asn231. The interval 373-715 (RELFVCPSQP…LKYLPALQQP (343 aa)) is glucuronyltransferase activity. The Mn(2+) site is built by Asp521 and Asp523.

In the C-terminal section; belongs to the glycosyltransferase 49 family. It in the N-terminal section; belongs to the glycosyltransferase 8 family. As to quaternary structure, interacts with B4GAT1. It depends on Mn(2+) as a cofactor. As to expression, widely expressed. Expressed at high level in placenta, pancreas and kidney compared to LARGE. Not expressed in brain.

The protein localises to the golgi apparatus membrane. The enzyme catalyses 3-O-[beta-D-GlcA-(1-&gt;3)-beta-D-Xyl-(1-&gt;4)-Rib-ol-P-Rib-ol-P-3-beta-D-GalNAc-(1-&gt;3)-beta-D-GlcNAc-(1-&gt;4)-(O-6-P-alpha-D-Man)]-Thr-[protein] + UDP-alpha-D-xylose = 3-O-[alpha-D-Xyl-(1-&gt;3)-beta-D-GlcA-(1-&gt;4)-beta-D-Xyl-(1-&gt;4)-Rib-ol-P-Rib-ol-P-3-beta-D-GalNAc-(1-&gt;3)-beta-D-GlcNAc-(1-&gt;4)-(O-6-P-alpha-D-Man)]-Thr-[protein] + UDP + H(+). The catalysed reaction is 3-O-{(1-&gt;[3)-alpha-D-Xyl-(1-&gt;3)-beta-D-GlcA-(1-&gt;](n)-4)-beta-D-Xyl-(1-&gt;4)-Rib-ol-P-Rib-ol-P-3-beta-D-GalNAc-(1-&gt;3)-beta-D-GlcNAc-(1-&gt;4)-O-6-P-alpha-D-Man}-L-Thr-[protein] + UDP-alpha-D-glucuronate = 3-O-{beta-D-GlcA-(1-&gt;[3)-alpha-D-Xyl-(1-&gt;3)-beta-D-GlcA-(1-&gt;](n)-4)-beta-D-Xyl-(1-&gt;4)-Rib-ol-P-Rib-ol-P-3-beta-D-GalNAc-(1-&gt;3)-beta-D-GlcNAc-(1-&gt;4)-O-6-P-alpha-D-Man}-L-Thr-[protein] + UDP + H(+). It carries out the reaction 3-O-{beta-D-GlcA-(1-&gt;[3)-alpha-D-Xyl-(1-&gt;3)-beta-D-GlcA-(1-&gt;](n)-4)-beta-D-Xyl-(1-&gt;4)-Rib-ol-P-Rib-ol-P-3-beta-D-GalNAc-(1-&gt;3)-beta-D-GlcNAc-(1-&gt;4)-O-6-P-alpha-D-Man}-L-Thr-[protein] + UDP-alpha-D-xylose = 3-O-{(1-&gt;[3)-alpha-D-Xyl-(1-&gt;3)-beta-D-GlcA-(1-&gt;](n+1)-4)-beta-D-Xyl-(1-&gt;4)-Rib-ol-P-Rib-ol-P-3-beta-D-GalNAc-(1-&gt;3)-beta-D-GlcNAc-(1-&gt;4)-O-6-P-alpha-D-Man}-L-Thr-[protein] + UDP + H(+). It functions in the pathway protein modification; protein glycosylation. In terms of biological role, bifunctional glycosyltransferase with both alpha-1,3-xylosyltransferase and beta-1,3-glucuronyltransferase activities involved in the maturation of alpha-dystroglycan (DAG1) by glycosylation leading to DAG1 binding to laminin G-like domain-containing extracellular proteins with high affinity and in a phosphorylated-O-mannosyl trisaccharide dependent manner. Elongates the glucuronyl-beta-1,4-xylose-beta disaccharide primer structure by adding repeating units [-3-Xylose-alpha-1,3-GlcA-beta-1-] to produce a heteropolysaccharide. Supports the maturation of DAG1 more effectively than LARGE1. In addition, can modify both heparan sulfate (HS)- and chondroitin/dermatan sulfate (CS/DS)-proteoglycans (PGs), namely GPC4, with a glycosaminoglycan (GAG)-like polysaccharide composed of xylose and glucuronic acid to confer laminin binding. The chain is Xylosyl- and glucuronyltransferase LARGE2 from Homo sapiens (Human).